Consider the following 267-residue polypeptide: Type II pantothenate kinase (267 aa).

Residue 6-13 coordinates ATP; that stretch reads DAGGTLIK. Glutamate 70 (proton acceptor) is an active-site residue. ATP is bound by residues threonine 99, 121 to 125, tyrosine 137, and serine 225; that span reads GGMIQ.

Belongs to the type II pantothenate kinase family. In terms of assembly, homodimer.

The protein resides in the cytoplasm. The enzyme catalyses (R)-pantothenate + ATP = (R)-4'-phosphopantothenate + ADP + H(+). Its pathway is cofactor biosynthesis; coenzyme A biosynthesis; CoA from (R)-pantothenate: step 1/5. Functionally, catalyzes the phosphorylation of pantothenate (Pan), the first step in CoA biosynthesis. This chain is Type II pantothenate kinase, found in Staphylococcus aureus (strain Mu50 / ATCC 700699).